A 158-amino-acid chain; its full sequence is SsrA-binding protein (158 aa).

This sequence belongs to the SmpB family.

Its subcellular location is the cytoplasm. Functionally, required for rescue of stalled ribosomes mediated by trans-translation. Binds to transfer-messenger RNA (tmRNA), required for stable association of tmRNA with ribosomes. tmRNA and SmpB together mimic tRNA shape, replacing the anticodon stem-loop with SmpB. tmRNA is encoded by the ssrA gene; the 2 termini fold to resemble tRNA(Ala) and it encodes a 'tag peptide', a short internal open reading frame. During trans-translation Ala-aminoacylated tmRNA acts like a tRNA, entering the A-site of stalled ribosomes, displacing the stalled mRNA. The ribosome then switches to translate the ORF on the tmRNA; the nascent peptide is terminated with the 'tag peptide' encoded by the tmRNA and targeted for degradation. The ribosome is freed to recommence translation, which seems to be the essential function of trans-translation. This chain is SsrA-binding protein, found in Pseudoalteromonas atlantica (strain T6c / ATCC BAA-1087).